The sequence spans 238 residues: DNA repair protein RecO (238 aa).

It belongs to the RecO family.

Functionally, involved in DNA repair and RecF pathway recombination. The sequence is that of DNA repair protein RecO from Hahella chejuensis (strain KCTC 2396).